The primary structure comprises 1645 residues: Thrombospondin type-1 domain-containing protein 7A (1645 aa).

An N-terminal signal peptide occupies residues 1–38 (MGLRAGRLASPSRGVLQLLRLPLLLLLLLSSGARGAAA). Over 39–1595 (QGDTEVPTLY…FGPDGRLKTW (1557 aa)) the chain is Extracellular. TSP type-1 domains are found at residues 46-105 (TLYL…KVCD), 109-181 (ELYD…IPCQ), and 183-236 (DCIV…NPCE). N-linked (GlcNAc...) asparagine glycosylation occurs at Asn-223. A disordered region spans residues 255–300 (PHTRQARQARRRGKNKEREKERGKAVKDPEARELIKKKRNRNRQNR). Residues 256–304 (HTRQARQARRRGKNKEREKERGKAVKDPEARELIKKKRNRNRQNRQENR) adopt a coiled-coil conformation. The segment covering 258-269 (RQARQARRRGKN) has biased composition (basic residues). Residues 270-288 (KEREKERGKAVKDPEAREL) show a composition bias toward basic and acidic residues. The segment covering 289–298 (IKKKRNRNRQ) has biased composition (basic residues). N-linked (GlcNAc...) asparagine glycosylation is present at Asn-321. 16 consecutive TSP type-1 domains span residues 349 to 405 (ECQV…VSQG), 412 to 499 (ATYG…VPCP), 501 to 563 (ECEV…PSCY), 623 to 684 (DCVL…HPCT), 685 to 758 (VYHW…LPCR), 760 to 820 (DCVV…PTCH), 821 to 893 (SYRW…IPCQ), 895 to 948 (DCQF…CPCD), 949 to 1022 (KYNA…IPCP), 1024 to 1084 (DCKL…SDCN), 1085 to 1152 (QYIW…LPCP), 1154 to 1208 (DCVI…KNCY), 1209 to 1272 (HYDY…VECP), 1274 to 1329 (NCQL…KPCY), 1330 to 1400 (RWQY…QPCP), and 1402 to 1463 (DCYL…GQCY). Disulfide bonds link Cys-424-Cys-494, Cys-444-Cys-498, and Cys-455-Cys-483. N-linked (GlcNAc...) asparagine glycosylation is present at Asn-439. N-linked (GlcNAc...) asparagine glycosylation is present at Asn-489. 2 disulfides stabilise this stretch: Cys-624/Cys-666 and Cys-635/Cys-639. Asn-668 is a glycosylation site (N-linked (GlcNAc...) asparagine). 7 disulfide bridges follow: Cys-678-Cys-683, Cys-696-Cys-753, Cys-717-Cys-757, Cys-728-Cys-741, Cys-761-Cys-803, Cys-772-Cys-776, and Cys-813-Cys-819. Asn-706 is a glycosylation site (N-linked (GlcNAc...) asparagine). Asn-957 carries an N-linked (GlcNAc...) asparagine glycan. 6 disulfide bridges follow: Cys-961–Cys-1017, Cys-983–Cys-1021, Cys-994–Cys-1007, Cys-1025–Cys-1062, Cys-1036–Cys-1040, and Cys-1079–Cys-1083. Residue Asn-1032 is glycosylated (N-linked (GlcNAc...) asparagine). Residues Cys-1201 and Cys-1207 are joined by a disulfide bond. A glycan (N-linked (GlcNAc...) asparagine) is linked at Asn-1213. 12 disulfide bridges follow: Cys-1220-Cys-1267, Cys-1228-Cys-1271, Cys-1239-Cys-1252, Cys-1275-Cys-1313, Cys-1286-Cys-1290, Cys-1323-Cys-1328, Cys-1339-Cys-1395, Cys-1346-Cys-1399, Cys-1357-Cys-1376, Cys-1403-Cys-1447, Cys-1414-Cys-1418, and Cys-1457-Cys-1462. Residue Asn-1264 is glycosylated (N-linked (GlcNAc...) asparagine). The N-linked (GlcNAc...) asparagine glycan is linked to Asn-1354. 2 N-linked (GlcNAc...) asparagine glycosylation sites follow: Asn-1488 and Asn-1535. The chain crosses the membrane as a helical span at residues 1596 to 1616 (VYGVAAGAFVLLVFIVSMIYL). The Cytoplasmic segment spans residues 1617–1645 (ACKKPKKPQRRQNNRLKPLTLAYDGDADM).

Post-translationally, proteolytic cleavage in the extracellular region generates a 210 kDa soluble form. In terms of processing, extensively N-glycosylated. In terms of tissue distribution, detected on kidney podocytes along the glomerular capillary wall (at protein level).

It is found in the cell membrane. The protein localises to the cell projection. It localises to the secreted. In terms of biological role, plays a role in actin cytoskeleton rearrangement. Its function is as follows. The soluble form promotes endothelial cell migration and filopodia formation during sprouting angiogenesis via a FAK-dependent mechanism. This is Thrombospondin type-1 domain-containing protein 7A (Thsd7a) from Mus musculus (Mouse).